A 104-amino-acid chain; its full sequence is Large ribosomal subunit protein uL23 (104 aa).

This sequence belongs to the universal ribosomal protein uL23 family. Part of the 50S ribosomal subunit. Contacts protein L29, and trigger factor when it is bound to the ribosome.

Functionally, one of the early assembly proteins it binds 23S rRNA. One of the proteins that surrounds the polypeptide exit tunnel on the outside of the ribosome. Forms the main docking site for trigger factor binding to the ribosome. This chain is Large ribosomal subunit protein uL23, found in Trichormus variabilis (strain ATCC 29413 / PCC 7937) (Anabaena variabilis).